The chain runs to 235 residues: MGDSQYSFSLTTFSPSGKLVQIEHALTAVGSGQTSLGIKAANGVVIATEKKLPSILVDETSVQKIQSLTPNIGVVYSGMGPDFRVLVRKSRKQAQQYYRLYKETIPVTQLVRETAAVMQEFTQSGGVRPFGVSLLIAGYDDNGPQLYQVDPSGSYFSWKASAMGKNVSNAKTFLEKRYTEDMELDDAIHTAILTLKEGYEGQISANNIEIGIIRSDREFKVLSPAEIKDFLEEVE.

The protein belongs to the peptidase T1A family. In terms of assembly, the 26S proteasome consists of a 20S proteasome core and two 19S regulatory subunits. The 20S proteasome core is composed of 28 subunits that are arranged in four stacked rings, resulting in a barrel-shaped structure. The two end rings are each formed by seven alpha subunits, and the two central rings are each formed by seven beta subunits. The catalytic chamber with the active sites is on the inside of the barrel.

The protein localises to the cytoplasm. Its subcellular location is the nucleus. In terms of biological role, the proteasome is a multicatalytic proteinase complex which is characterized by its ability to cleave peptides with Arg, Phe, Tyr, Leu, and Glu adjacent to the leaving group at neutral or slightly basic pH. The proteasome has an ATP-dependent proteolytic activity. In Oryza sativa subsp. indica (Rice), this protein is Proteasome subunit alpha type-2 (PAB1).